The sequence spans 86 residues: uncharacterized protein (86 aa).

This is an uncharacterized protein from Saccharomyces cerevisiae (strain ATCC 204508 / S288c) (Baker's yeast).